A 370-amino-acid polypeptide reads, in one-letter code: Cytochrome b (370 aa).

Helical transmembrane passes span 30–50 (FGSM…FLAF), 74–96 (WIFR…LHIF), 109–129 (VWMS…MGYV), and 175–195 (FFVL…GHLI). The heme b site is built by histidine 80 and histidine 94. Residues histidine 179 and histidine 193 each coordinate heme b. Histidine 198 serves as a coordination point for a ubiquinone. Transmembrane regions (helical) follow at residues 221-240 (YIGK…VLSL), 284-304 (VLGV…ALVN), 316-336 (FLVF…QCMV), and 342-362 (VLSP…LGIF).

Belongs to the cytochrome b family. As to quaternary structure, the main subunits of complex b-c1 are: cytochrome b, cytochrome c1 and the Rieske protein. Requires heme b as cofactor.

It localises to the mitochondrion inner membrane. Its function is as follows. Component of the ubiquinol-cytochrome c reductase complex (complex III or cytochrome b-c1 complex) that is part of the mitochondrial respiratory chain. The b-c1 complex mediates electron transfer from ubiquinol to cytochrome c. Contributes to the generation of a proton gradient across the mitochondrial membrane that is then used for ATP synthesis. This is Cytochrome b (ctb-1) from Caenorhabditis briggsae.